A 458-amino-acid polypeptide reads, in one-letter code: UDP-N-acetylmuramoylalanine--D-glutamate ligase (458 aa).

124–130 (GSDGKTT) lines the ATP pocket.

Belongs to the MurCDEF family.

The protein resides in the cytoplasm. The catalysed reaction is UDP-N-acetyl-alpha-D-muramoyl-L-alanine + D-glutamate + ATP = UDP-N-acetyl-alpha-D-muramoyl-L-alanyl-D-glutamate + ADP + phosphate + H(+). It participates in cell wall biogenesis; peptidoglycan biosynthesis. In terms of biological role, cell wall formation. Catalyzes the addition of glutamate to the nucleotide precursor UDP-N-acetylmuramoyl-L-alanine (UMA). This is UDP-N-acetylmuramoylalanine--D-glutamate ligase from Clostridium perfringens (strain 13 / Type A).